Here is a 225-residue protein sequence, read N- to C-terminus: NAD(P)H-quinone oxidoreductase subunit K, chloroplastic (225 aa).

4 residues coordinate [4Fe-4S] cluster: C43, C44, C108, and C139.

Belongs to the complex I 20 kDa subunit family. As to quaternary structure, NDH is composed of at least 16 different subunits, 5 of which are encoded in the nucleus. [4Fe-4S] cluster is required as a cofactor.

It is found in the plastid. The protein localises to the chloroplast thylakoid membrane. It catalyses the reaction a plastoquinone + NADH + (n+1) H(+)(in) = a plastoquinol + NAD(+) + n H(+)(out). The catalysed reaction is a plastoquinone + NADPH + (n+1) H(+)(in) = a plastoquinol + NADP(+) + n H(+)(out). NDH shuttles electrons from NAD(P)H:plastoquinone, via FMN and iron-sulfur (Fe-S) centers, to quinones in the photosynthetic chain and possibly in a chloroplast respiratory chain. The immediate electron acceptor for the enzyme in this species is believed to be plastoquinone. Couples the redox reaction to proton translocation, and thus conserves the redox energy in a proton gradient. This Arabidopsis thaliana (Mouse-ear cress) protein is NAD(P)H-quinone oxidoreductase subunit K, chloroplastic.